The primary structure comprises 970 residues: Sodium/calcium exchanger 1 (970 aa).

The N-terminal stretch at 1 to 32 (MLQLRLLPTFSMGCHLLAVVALLFSHVDLISA) is a signal peptide. Residues 33-71 (ETEMEGEGNETGECTGSYYCKKGVILPIWEPQDPSFGDK) are Extracellular-facing. N41 carries an N-linked (GlcNAc...) asparagine glycan. A helical membrane pass occupies residues 72-92 (IARATVYFVAMVYMFLGVSII). Topologically, residues 93–133 (ADRFMSSIEVITSQEKEITIKKPNGETTKTTVRIWNETVSN) are cytoplasmic. A helical transmembrane segment spans residues 134 to 154 (LTLMALGSSAPEILLSVIEVC). The stretch at 138-178 (ALGSSAPEILLSVIEVCGHNFTAGDLGPSTIVGSAAFNMFI) is one Alpha-1 repeat. Over 155-167 (GHNFTAGDLGPST) the chain is Extracellular. N-linked (GlcNAc...) asparagine glycosylation occurs at N157. The chain crosses the membrane as a helical span at residues 168–188 (IVGSAAFNMFIIIALCVYVVP). At 189-201 (DGETRKIKHLRVF) the chain is on the cytoplasmic side. The helical transmembrane segment at 202 to 222 (FVTAAWSIFAYTWLYIILSVI) threads the bilayer. At 223-228 (SPGVVE) the chain is on the extracellular side. The chain crosses the membrane as a helical span at residues 229 to 249 (VWEGLLTFFFFPICVVFAWVA). Residues 250-797 (DRRLLFYKYV…FVPPTEYWNG (548 aa)) are Cytoplasmic-facing. The segment at 251–270 (RRLLFYKYVYKRYRAGKQRG) is putative calmodulin-binding region. Phosphoserine is present on residues S282 and S389. Calx-beta domains lie at 393 to 493 (VNTE…VHLS) and 524 to 624 (ATVT…LEIG). Ca(2+) contacts are provided by E417, D453, D478, D479, I481, E483, E486, D530, D531, D532, E548, D584, D610, E611, E612, and E715. Residues 798–818 (WACFIVSILMIGILTAFIGDL) form a helical membrane-spanning segment. Over 819–821 (ASH) the chain is Extracellular. The chain crosses the membrane as a helical span at residues 822–842 (FGCTIGLKDSVTAVVFVALGT). An Alpha-2 repeat occupies 839-875 (ALGTSVPDTFASKVAATQDQYADASIGNVTGSNAVNV). The Cytoplasmic portion of the chain corresponds to 843–871 (SVPDTFASKVAATQDQYADASIGNVTGSN). Residues 872–892 (AVNVFLGIGVAWSIAAIYHAA) traverse the membrane as a helical segment. Topologically, residues 893–903 (NGEQFKVSPGT) are extracellular. Residues 904–924 (LAFSVTLFTIFAFINVGVLLY) traverse the membrane as a helical segment. Topologically, residues 925 to 941 (RRRPEIGGELGGPRTAK) are cytoplasmic. A helical transmembrane segment spans residues 942 to 962 (LLTSCLFVLLWLLYIFFSSLE). Over 963 to 970 (AYCHIKGF) the chain is Extracellular.

The protein belongs to the Ca(2+):cation antiporter (CaCA) (TC 2.A.19) family. SLC8 subfamily. In terms of tissue distribution, cardiac sarcolemma (at protein level).

Its subcellular location is the cell membrane. It is found in the sarcolemma. The catalysed reaction is Ca(2+)(in) + 3 Na(+)(out) = Ca(2+)(out) + 3 Na(+)(in). Activated by micromolar levels of Ca(2+). In the absence of regulatory Ca(2+), channels open rapidly, and then inactivate rapidly. Inactivation is enhanced by Na(+) and is inhibited by micromolar levels of Ca(2+). Functionally, mediates the exchange of one Ca(2+) ion against three to four Na(+) ions across the cell membrane, and thereby contributes to the regulation of cytoplasmic Ca(2+) levels and Ca(2+)-dependent cellular processes. Contributes to Ca(2+) transport during excitation-contraction coupling in muscle. In a first phase, voltage-gated channels mediate the rapid increase of cytoplasmic Ca(2+) levels due to release of Ca(2+) stores from the endoplasmic reticulum. SLC8A1 mediates the export of Ca(2+) from the cell during the next phase, so that cytoplasmic Ca(2+) levels rapidly return to baseline. Required for normal embryonic heart development and the onset of heart contractions. This chain is Sodium/calcium exchanger 1 (SLC8A1), found in Canis lupus familiaris (Dog).